The following is an 834-amino-acid chain: Pentatricopeptide repeat-containing protein At4g39530 (834 aa).

PPR repeat units follow at residues 78–112 (DTYLSNILINLYSRAGGMVYARKVFEKMPERNLVS), 113–144 (WSTMVSACNHHGIYEESLVVFLEFWRTRKDSP), 145–181 (NEYILSSFIQACSGLDGRGRWMVFQLQSFLVKSGFDR), 182–212 (DVYVGTLLIDFYLKDGNIDYARLVFDALPEK), 213–247 (STVTWTTMISGCVKMGRSYVSLQLFYQLMEDNVVP), 248–282 (DGYILSTVLSACSILPFLEGGKQIHAHILRYGLEM), 283–313 (DASLMNVLIDSYVKCGRVIAAHKLFNGMPNK), 314–348 (NIISWTTLLSGYKQNALHKEAMELFTSMSKFGLKP), 349–383 (DMYACSSILTSCASLHALGFGTQVHAYTIKANLGN), 384–414 (DSYVTNSLIDMYAKCDCLTDARKVFDIFAAA), 415–452 (DVVLFNAMIEGYSRLGTQWELHEALNIFRDMRFRLIRP), 453–487 (SLLTFVSLLRASASLTSLGLSKQIHGLMFKYGLNL), 488–518 (DIFAGSALIDVYSNCYCLKDSRLVFDEMKVK), 519–553 (DLVIWNSMFAGYVQQSENEEALNLFLELQLSRERP), 554–588 (DEFTFANMVTAAGNLASVQLGQEFHCQLLKRGLEC), 589–619 (NPYITNALLDMYAKCGSPEDAHKAFDSAASR), 620–654 (DVVCWNSVISSYANHGEGKKALQMLEKMMSEGIEP), 655–689 (NYITFVGVLSACSHAGLVEDGLKQFELMLRFGIEP), and 690–720 (ETEHYVCMVSLLGRAGRLNKARELIEKMPTK). The segment at 725 to 800 (VWRSLLSGCA…EPGRSWIGIN (76 aa)) is type E motif. The segment at 801–831 (KEVHIFLSKDKSHCKANQIYEVLDDLLVQIR) is type E(+) motif.

This sequence belongs to the PPR family. PCMP-E subfamily.

This Arabidopsis thaliana (Mouse-ear cress) protein is Pentatricopeptide repeat-containing protein At4g39530 (PCMP-E52).